The following is a 314-amino-acid chain: 3'-5' exoribonuclease YhaM (314 aa).

An HD domain is found at 163–279 (HVVSMLDLAK…LHYIDNLDAK (117 aa)).

The protein belongs to the YhaM family.

In terms of biological role, shows a 3'-5' exoribonuclease activity. This chain is 3'-5' exoribonuclease YhaM, found in Bacillus cereus (strain AH820).